The sequence spans 61 residues: Small ribosomal subunit protein uS14C (61 aa).

Residues Cys24, Cys27, Cys40, and Cys43 each coordinate Zn(2+).

Belongs to the universal ribosomal protein uS14 family. Zinc-binding uS14 subfamily. As to quaternary structure, part of the 30S ribosomal subunit. Contacts proteins S3 and S10. The cofactor is Zn(2+).

In terms of biological role, binds 16S rRNA, required for the assembly of 30S particles and may also be responsible for determining the conformation of the 16S rRNA at the A site. This chain is Small ribosomal subunit protein uS14C, found in Enterococcus faecalis (strain ATCC 700802 / V583).